Reading from the N-terminus, the 571-residue chain is Methionine--tRNA ligase (571 aa).

A 'HIGH' region motif is present at residues 10–20 (PYVNAVPHLGN). Zn(2+) is bound by residues C143, C146, C156, and C159. The 'KMSKS' region signature appears at 333–337 (KFSKS). An ATP-binding site is contributed by K336.

The protein belongs to the class-I aminoacyl-tRNA synthetase family. MetG type 1 subfamily. Zn(2+) is required as a cofactor.

The protein resides in the cytoplasm. It carries out the reaction tRNA(Met) + L-methionine + ATP = L-methionyl-tRNA(Met) + AMP + diphosphate. Functionally, is required not only for elongation of protein synthesis but also for the initiation of all mRNA translation through initiator tRNA(fMet) aminoacylation. The protein is Methionine--tRNA ligase of Sulfurisphaera tokodaii (strain DSM 16993 / JCM 10545 / NBRC 100140 / 7) (Sulfolobus tokodaii).